We begin with the raw amino-acid sequence, 372 residues long: tRNA pseudouridine synthase D (372 aa).

The active-site Nucleophile is the D85. The region spanning 160–330 is the TRUD domain; it reads GFANYFGYQR…MQGSRRFMWG (171 aa).

The protein belongs to the pseudouridine synthase TruD family.

It catalyses the reaction uridine(13) in tRNA = pseudouridine(13) in tRNA. In terms of biological role, responsible for synthesis of pseudouridine from uracil-13 in transfer RNAs. The protein is tRNA pseudouridine synthase D of Campylobacter jejuni subsp. jejuni serotype O:2 (strain ATCC 700819 / NCTC 11168).